The primary structure comprises 313 residues: Aspartate carbamoyltransferase catalytic subunit (313 aa).

The carbamoyl phosphate site is built by Arg-54 and Thr-55. Position 82 (Lys-82) interacts with L-aspartate. Residues Arg-104, His-132, and Gln-135 each coordinate carbamoyl phosphate. 2 residues coordinate L-aspartate: Arg-165 and Arg-219. Carbamoyl phosphate contacts are provided by Gly-260 and Pro-261.

This sequence belongs to the aspartate/ornithine carbamoyltransferase superfamily. ATCase family. In terms of assembly, heterododecamer (2C3:3R2) of six catalytic PyrB chains organized as two trimers (C3), and six regulatory PyrI chains organized as three dimers (R2).

It carries out the reaction carbamoyl phosphate + L-aspartate = N-carbamoyl-L-aspartate + phosphate + H(+). The protein operates within pyrimidine metabolism; UMP biosynthesis via de novo pathway; (S)-dihydroorotate from bicarbonate: step 2/3. In terms of biological role, catalyzes the condensation of carbamoyl phosphate and aspartate to form carbamoyl aspartate and inorganic phosphate, the committed step in the de novo pyrimidine nucleotide biosynthesis pathway. In Thermobifida fusca (strain YX), this protein is Aspartate carbamoyltransferase catalytic subunit.